The sequence spans 148 residues: Large ribosomal subunit protein bL9 (148 aa).

Belongs to the bacterial ribosomal protein bL9 family.

Functionally, binds to the 23S rRNA. The sequence is that of Large ribosomal subunit protein bL9 from Staphylococcus aureus (strain Newman).